We begin with the raw amino-acid sequence, 211 residues long: Histone H1t (211 aa).

An N-acetylalanine modification is found at Ala1. Low complexity predominate over residues 1-16; that stretch reads AETAPAAPADSVPASV. The tract at residues 1 to 42 is disordered; sequence AETAPAAPADSVPASVEKPPAKKRGKKPVGLTGTSRKAPSAS. Residues 32-42 are compositionally biased toward polar residues; sequence TGTSRKAPSAS. The region spanning 39–112 is the H15 domain; sequence PSASVSKLIT…GASGSFKLSK (74 aa). The residue at position 57 (Arg57) is a Citrulline. The tract at residues 101-211 is disordered; sequence GTGASGSFKL…TNPRKATNRK (111 aa). The segment covering 121–135 has biased composition (basic residues); sequence GKVKKPAAAKTKKLV. Residue Ser142 is modified to Phosphoserine. The segment covering 147–156 has biased composition (basic residues); it reads KANKRAKKSR. At Thr158 the chain carries Phosphothreonine. Phosphoserine occurs at positions 166 and 181. The span at 176–189 shows a compositional bias: basic residues; the sequence is KQQRKSPAKARAAK.

The protein belongs to the histone H1/H5 family. Phosphorylated in early spermatids. Post-translationally, citrullination at Arg-57 (H1R54ci) by PADI4 takes place within the DNA-binding site of H1 and results in its displacement from chromatin and global chromatin decondensation, thereby promoting pluripotency and stem cell maintenance. In terms of tissue distribution, testis-specific.

It is found in the nucleus. The protein resides in the chromosome. Testis-specific histone H1 that forms less compacted chromatin compared to other H1 histone subtypes. Formation of more relaxed chromatin may be required to promote chromatin architecture required for proper chromosome regulation during meiosis, such as homologous recombination. Histones H1 act as linkers that bind to nucleosomes and compact polynucleosomes into a higher-order chromatin configuration. The protein is Histone H1t of Sus scrofa (Pig).